The sequence spans 200 residues: Protein RISC-INTERACTING CLEARING 3'-5' EXORIBONUCLEASE 1 (200 aa).

Oligomerization regions lie at residues 35-66, 102-127, and 166-173; these read SKIL…KSEW, KFVT…IVIR, and DSIQSKWD.

This sequence belongs to the RICE family. In terms of assembly, homohexamer with DnaQ-like exonuclease fold in a ring-shaped structure with a central cavity. Component of AGO1 and AGO10-centered RNA-induced silencing complexes (RISC). Interacts with and acts as a cofactor of AGO1 and AGO10. As to expression, ubiquitously expressed throughout development in germinating seeds, cotyledons, leaves and roots of young seedlings and adult plants, stems and inflorescence.

The protein resides in the cytoplasm. It catalyses the reaction Exonucleolytic cleavage in the 3'- to 5'-direction to yield nucleoside 5'-phosphates.. 3'-to-5' exoribonuclease (RNase) specifically targeting single-stranded RNAs. Triggers miRNA accumulation in RNA-induced silencing complex (RISC), composed of miRNAs and AGO proteins, by degrading uridylated cleavage fragments. Required during plant growth and development. The polypeptide is Protein RISC-INTERACTING CLEARING 3'-5' EXORIBONUCLEASE 1 (Arabidopsis thaliana (Mouse-ear cress)).